The chain runs to 750 residues: Circadian input-output histidine kinase CikA (750 aa).

Residues 1 to 173 form an N-terminal domain region; sequence MLPAFSPIFR…QVIAQIRQSL (173 aa). The tract at residues 174–333 is GAF domain; it reads DLSEILNNAV…KNFLGQIGEH (160 aa). Positions 385–609 constitute a Histidine kinase domain; sequence NISHELRTPL…IFTTVIPQQN (225 aa). The residue at position 388 (His388) is a Phosphohistidine; by autocatalysis. A psR domain, bind KaiB(fs) region spans residues 604–750; sequence VIPQQNFPPT…VQSIQQEPLR (147 aa). Residues 631–745 enclose the Response regulatory domain; the sequence is SVIVIEQDEE…LLLQRVQSIQ (115 aa). Position 680 is a 4-aspartylphosphate (Asp680).

The protein in the N-terminal section; belongs to the phytochrome family. As to quaternary structure, homodimer. Part of the circadian clock (KaiA, KaiB, KaiC, CikA, RpaA, SasA), the composition of which varies during the circadian cycle. KaiA and CikA compete for binding to KaiB(fs). Interacts with RpaA.

The catalysed reaction is ATP + protein L-histidine = ADP + protein N-phospho-L-histidine.. In terms of biological role, functions in an input pathway to the Kai circadian clock. Senses oxidized quinones via its C-terminal pseudo-receiver domain, providing a link between cell metabolism and the clock. Affects the ratio of phosphorylated to unphosphorylated KaiC, binds quinones via its pseudo-receptor domain. Quinone-binding destabilizes the protein rapidly. Autophosphorylates, does not transfer the phosphate to its pseudo-receiver (PsR) domain. May play a role in cell division. Also functions in a two-component CikA/RpaA output pathway from the circadian clock, negatively regulating kaiBC expression independently of labA and of sasA. One of three clock output pathways. Dephosphorylates phospho-RpaA, enhanced by KaiB and KaiC, has only modest kinase activity on RpaA. In Synechocystis sp. (strain ATCC 27184 / PCC 6803 / Kazusa), this protein is Circadian input-output histidine kinase CikA.